We begin with the raw amino-acid sequence, 291 residues long: MRTHDIPRSPLVGHKKNAAPDGIGASRACCPARENEPFKKGSTNSRGGGVEWSRSSTRRVRGSALERGMKQLKWWAVGPVLGICAGVWGAAHPVHADPWDTTAAGRSTIRLSAMGAVPLFQVDWCNSGRGDDRNANAQTNGHKYIYPAFSAALGFEHFVCRGLSLGIDASVQYHCSYPNNTYSPTTPYYYLAIPVALTAGYTVAFWRIRLPLTVGAGFNYQHYYTSTYYGLVLKAAAGCYFQLTEHWSLGVSATYSGVPRSCEKIIEEDRQQTNTRTAQFIAAGVDVRYHL.

The segment at 1 to 55 (MRTHDIPRSPLVGHKKNAAPDGIGASRACCPARENEPFKKGSTNSRGGGVEWSRS) is disordered. 2 consecutive transmembrane segments (helical) span residues 74–96 (WWAVGPVLGICAGVWGAAHPVHA) and 188–210 (YYYLAIPVALTAGYTVAFWRIRL).

To T.pallidum TP_0733.

It localises to the cell membrane. This is an uncharacterized protein from Treponema pallidum (strain Nichols).